An 858-amino-acid polypeptide reads, in one-letter code: Elongation factor 2 (858 aa).

Positions 17–362 constitute a tr-type G domain; that stretch reads ANIRNMSVIA…MITIHLPSPV (346 aa). Residue 26–33 coordinates GTP; it reads AHVDHGKS. Phosphothreonine is present on residues threonine 57 and threonine 59. GTP contacts are provided by residues 158-161 and 216-218; these read NKMD and SGL. Histidine 715 carries the post-translational modification Diphthamide.

Belongs to the TRAFAC class translation factor GTPase superfamily. Classic translation factor GTPase family. EF-G/EF-2 subfamily. In terms of assembly, binds to 80S ribosomes. Actively translating ribosomes show mutually exclusive binding of eIF5a (EIF5A or EIF5A2) and EEF2/eEF2. Interacts with SERBP1; interaction sequesters EEF2/eEF2 at the A-site of the ribosome, thereby blocking the interaction sites of the mRNA-tRNA complex, promoting ribosome stabilization and hibernation. Interacts with HABP4; interaction takes place at the A-site of hibernating ribosomes and promotes ribosome stabilization. Phosphorylation by EF-2 kinase completely inactivates EF-2. In terms of processing, diphthamide is 2-[3-carboxyamido-3-(trimethyl-ammonio)propyl]histidine.

The protein localises to the cytoplasm. It localises to the nucleus. It catalyses the reaction GTP + H2O = GDP + phosphate + H(+). In terms of biological role, catalyzes the GTP-dependent ribosomal translocation step during translation elongation. During this step, the ribosome changes from the pre-translocational (PRE) to the post-translocational (POST) state as the newly formed A-site-bound peptidyl-tRNA and P-site-bound deacylated tRNA move to the P and E sites, respectively. Catalyzes the coordinated movement of the two tRNA molecules, the mRNA and conformational changes in the ribosome. In Gallus gallus (Chicken), this protein is Elongation factor 2 (EEF2).